Here is a 374-residue protein sequence, read N- to C-terminus: Mannitol-1-phosphate 5-dehydrogenase (374 aa).

3-14 (AVHFGAGNIGRG) provides a ligand contact to NAD(+).

Belongs to the mannitol dehydrogenase family.

The enzyme catalyses D-mannitol 1-phosphate + NAD(+) = beta-D-fructose 6-phosphate + NADH + H(+). The protein is Mannitol-1-phosphate 5-dehydrogenase of Shouchella clausii (strain KSM-K16) (Alkalihalobacillus clausii).